The following is a 130-amino-acid chain: Histone H2A type 1 (130 aa).

Residues 1-22 (MSGRGKQGGKARAKAKTRSSRA) are disordered. Residue S2 is modified to N-acetylserine. S2 is modified (phosphoserine; by RPS6KA5). R4 carries the citrulline; alternate modification. Position 4 is a symmetric dimethylarginine; by PRMT5; alternate (R4). Position 6 is an N6-(2-hydroxyisobutyryl)lysine (K6). A compositionally biased stretch (basic residues) spans 7 to 19 (QGGKARAKAKTRS). Residue K10 is modified to N6-(2-hydroxyisobutyryl)lysine; alternate. N6-lactoyllysine; alternate is present on K10. At K10 the chain carries N6-succinyllysine; alternate. Glycyl lysine isopeptide (Lys-Gly) (interchain with G-Cter in ubiquitin) cross-links involve residues K14 and K16. K37 is subject to N6-(2-hydroxyisobutyryl)lysine; alternate. N6-(beta-hydroxybutyryl)lysine; alternate is present on K37. K37 carries the N6-crotonyllysine; alternate modification. An N6-(2-hydroxyisobutyryl)lysine mark is found at K75 and K76. At K96 the chain carries N6-(2-hydroxyisobutyryl)lysine; alternate. The residue at position 96 (K96) is an N6-succinyllysine; alternate. K96 bears the N6-glutaryllysine; alternate mark. At K100 the chain carries N6-glutaryllysine. The residue at position 105 (Q105) is an N5-methylglutamine. An N6-(2-hydroxyisobutyryl)lysine; alternate modification is found at K119. Residues K119 and K120 each carry the N6-crotonyllysine; alternate modification. N6-glutaryllysine; alternate is present on residues K119 and K120. K120 is covalently cross-linked (Glycyl lysine isopeptide (Lys-Gly) (interchain with G-Cter in ubiquitin); alternate). T121 is subject to Phosphothreonine; by DCAF1. K126 is subject to N6-crotonyllysine; alternate. At K126 the chain carries N6-glutaryllysine; alternate.

This sequence belongs to the histone H2A family. As to quaternary structure, the nucleosome is a histone octamer containing two molecules each of H2A, H2B, H3 and H4 assembled in one H3-H4 heterotetramer and two H2A-H2B heterodimers. The octamer wraps approximately 147 bp of DNA. Interacts with VRK1; the interaction is mediated by the nucleosome acidic patch, a cluster of negatively charged residues of H2A and H2B forming a cleft within the nucleosome core. Post-translationally, deiminated on Arg-4 in granulocytes upon calcium entry. In terms of processing, monoubiquitination of Lys-120 (H2AK119Ub) by RING1, TRIM37 and RNF2/RING2 complex gives a specific tag for epigenetic transcriptional repression and participates in X chromosome inactivation of female mammals. It is involved in the initiation of both imprinted and random X inactivation. Ubiquitinated H2A is enriched in inactive X chromosome chromatin. Ubiquitination of H2A functions downstream of methylation of 'Lys-27' of histone H3 (H3K27me). H2AK119Ub by RNF2/RING2 can also be induced by ultraviolet and may be involved in DNA repair. Following DNA double-strand breaks (DSBs), it is ubiquitinated through 'Lys-63' linkage of ubiquitin moieties by the E2 ligase UBE2N and the E3 ligases RNF8 and RNF168, leading to the recruitment of repair proteins to sites of DNA damage. Ubiquitination at Lys-14 and Lys-16 (H2AK13Ub and H2AK15Ub, respectively) in response to DNA damage is initiated by RNF168 that mediates monoubiquitination at these 2 sites, and 'Lys-63'-linked ubiquitin are then conjugated to monoubiquitin; RNF8 is able to extend 'Lys-63'-linked ubiquitin chains in vitro. H2AK119Ub and ionizing radiation-induced 'Lys-63'-linked ubiquitination (H2AK13Ub and H2AK15Ub) are distinct events. Phosphorylation on Ser-2 (H2AS1ph) is enhanced during mitosis. Phosphorylation on Ser-2 by RPS6KA5/MSK1 directly represses transcription. Acetylation of H3 inhibits Ser-2 phosphorylation by RPS6KA5/MSK1. Phosphorylation at Thr-121 (H2AT120ph) by DCAF1 is present in the regulatory region of many tumor suppresor genes and down-regulates their transcription. Post-translationally, symmetric dimethylation on Arg-4 by the PRDM1/PRMT5 complex may play a crucial role in the germ-cell lineage. In terms of processing, glutamine methylation at Gln-105 (H2AQ104me) by FBL is specifically dedicated to polymerase I. It is present at 35S ribosomal DNA locus and impairs binding of the FACT complex. Crotonylation (Kcr) is specifically present in male germ cells and marks testis-specific genes in post-meiotic cells, including X-linked genes that escape sex chromosome inactivation in haploid cells. Crotonylation marks active promoters and enhancers and confers resistance to transcriptional repressors. It is also associated with post-meiotically activated genes on autosomes. Post-translationally, lactylated in macrophages by EP300/P300 by using lactoyl-CoA directly derived from endogenous or exogenous lactate, leading to stimulates gene transcription.

It is found in the nucleus. It localises to the chromosome. Core component of nucleosome. Nucleosomes wrap and compact DNA into chromatin, limiting DNA accessibility to the cellular machineries which require DNA as a template. Histones thereby play a central role in transcription regulation, DNA repair, DNA replication and chromosomal stability. DNA accessibility is regulated via a complex set of post-translational modifications of histones, also called histone code, and nucleosome remodeling. This Bos taurus (Bovine) protein is Histone H2A type 1.